The sequence spans 1515 residues: MAGNLVSWACKLCRSPEGFGPISFYGDFTQCFIDGVILNLSAIFMITFGIRDLVNLCKKKHSGIKYRRNWIIVSRMALVLLEIAFVSLASLNISKEEAENFTIVSQYASTMLSLFVALALHWIEYDRSVVANTVLLFYWLFETFGNFAKLINILIRHTYEGIWYSGQTGFILTLFQVITCASILLLEALPKKPLMPHQHIHQTLTRRKPNPYDSANIFSRITFSWMSGLMKTGYEKYLVEADLYKLPRNFSSEELSQKLEKNWENELKQKSNPSLSWAICRTFGSKMLLAAFFKAIHDVLAFTQPQLLRILIKFVTDYNSERQDDHSSLQGFENNHPQKLPIVRGFLIAFAMFLVGFTQTSVLHQYFLNVFNTGMYIKSALTALIYQKSLVLSNEASGLSSTGDIVNLMSVDVQKLQDLTQWLNLIWSGPFQIIICLYSLYKLLGNSMWVGVIILVIMMPLNSFLMRIQKKLQKSQMKYKDERTRVISEILNNIKSLKLYAWEKPYREKLEEVRNNKELKNLTKLGCYMAVTSFQFNIVPFLVSCCTFAVFVYTEDRALTTDLVFPALTLFNLLSFPLMIIPMVLNSFIEASVSIGRLFTFFTNEELQPDSVQRLPKVKNIGDVAINIGDDATFLWQRKPEYKVALKNINFQAKKGNLTCIVGKVGSGKTALLSCMLGDLFRVKGFATVHGSVAYVSQVPWIMNGTVKENILFGHRYDAEFYEKTIKACALTIDLAILMDGDKTLVGEKGISLSGGQKARLSLARAVYARADTYLLDDPLAAVDEHVARHLIEHVLGPNGLLHTKTKVLATNKVSALSIADSIALLDNGEITQQGTYDEITKDADSPLWKLLNNYGKKNNGKSNEFGDSSESSVRESSIPVEGELEQLQKLNDLDFGNSDAISLRRASDATLGSIDFGDDENIAKREHREQGKVKWNIYLEYAKACNPKSVCVFILFIVISMFLSVMGNVWLKHWSEVNSRYGSNPNAARYLAIYFALGIGSALATLIQTIVLWVFCTIHASKYLHNLMTNSVLRAPMTFFETTPIGRILNRFSNDIYKVDALLGRTFSQFFVNAVKVTFTITVICATTWQFIFIIIPLSVFYIYYQQYYLRTSRELRRLDSITRSPIYSHFQETLGGLATVRGYSQQKRFSHINQCRIDNNMSAFYPSINANRWLAYRLELIGSIIILGAATLSVFRLKQGTLTAGMVGLSLSYALQITQTLNWIVRMTVEVETNIVSVERIKEYADLKSEAPLIVEGHRPPKEWPSQGDIKFNNYSTRYRPELDLVLKHINIHIKPNEKVGIVGRTGAGKSSLTLALFRMIEASEGNIVIDNIAINEIGLYDLRHKLSIIPQDSQVFEGTVRENIDPINQYTDEAIWRALELSHLKEHVLSMSNDGLDAQLTEGGGNLSVGQRQLLCLARAMLVPSKILVLDEATAAVDVETDKVVQETIRTAFKDRTILTIAHRLNTIMDSDRIIVLDNGKVAEFDSPGQLLSDNKSLFYSLCMEAGLVNEN.

Residues 1–32 are Vacuolar-facing; it reads MAGNLVSWACKLCRSPEGFGPISFYGDFTQCF. A helical transmembrane segment spans residues 33–53; the sequence is IDGVILNLSAIFMITFGIRDL. Residues 54–73 lie on the Cytoplasmic side of the membrane; sequence VNLCKKKHSGIKYRRNWIIV. A helical membrane pass occupies residues 74 to 94; sequence SRMALVLLEIAFVSLASLNIS. At 95-99 the chain is on the vacuolar side; the sequence is KEEAE. A helical membrane pass occupies residues 100–120; that stretch reads NFTIVSQYASTMLSLFVALAL. At 121-130 the chain is on the cytoplasmic side; that stretch reads HWIEYDRSVV. The helical transmembrane segment at 131-151 threads the bilayer; it reads ANTVLLFYWLFETFGNFAKLI. The Vacuolar segment spans residues 152 to 169; the sequence is NILIRHTYEGIWYSGQTG. Residues 170–190 traverse the membrane as a helical segment; it reads FILTLFQVITCASILLLEALP. Over 191–278 the chain is Cytoplasmic; that stretch reads KKPLMPHQHI…QKSNPSLSWA (88 aa). S251 carries the post-translational modification Phosphoserine. The chain crosses the membrane as a helical span at residues 279–299; the sequence is ICRTFGSKMLLAAFFKAIHDV. One can recognise an ABC transmembrane type-1 1 domain in the interval 287–590; it reads MLLAAFFKAI…IPMVLNSFIE (304 aa). Residues 300-345 are Vacuolar-facing; it reads LAFTQPQLLRILIKFVTDYNSERQDDHSSLQGFENNHPQKLPIVRG. A helical membrane pass occupies residues 346-366; the sequence is FLIAFAMFLVGFTQTSVLHQY. Residues 367-422 are Cytoplasmic-facing; it reads FLNVFNTGMYIKSALTALIYQKSLVLSNEASGLSSTGDIVNLMSVDVQKLQDLTQW. A helical transmembrane segment spans residues 423–443; it reads LNLIWSGPFQIIICLYSLYKL. At 444 to 446 the chain is on the vacuolar side; that stretch reads LGN. A helical membrane pass occupies residues 447-467; sequence SMWVGVIILVIMMPLNSFLMR. The Cytoplasmic segment spans residues 468-530; the sequence is IQKKLQKSQM…NLTKLGCYMA (63 aa). A helical transmembrane segment spans residues 531–551; it reads VTSFQFNIVPFLVSCCTFAVF. Residues 552 to 572 are Vacuolar-facing; sequence VYTEDRALTTDLVFPALTLFN. The chain crosses the membrane as a helical span at residues 573 to 593; the sequence is LLSFPLMIIPMVLNSFIEASV. At 594–943 the chain is on the cytoplasmic side; sequence SIGRLFTFFT…VKWNIYLEYA (350 aa). Residues 626–853 form the ABC transporter 1 domain; it reads INIGDDATFL…ADSPLWKLLN (228 aa). 663 to 670 serves as a coordination point for ATP; sequence GKVGSGKT. Phosphoserine is present on residues S873, S903, and S908. A Phosphothreonine modification is found at T911. Phosphoserine is present on S914. The chain crosses the membrane as a helical span at residues 944–964; the sequence is KACNPKSVCVFILFIVISMFL. The region spanning 951–1235 is the ABC transmembrane type-1 2 domain; that stretch reads VCVFILFIVI…IVRMTVEVET (285 aa). The Vacuolar portion of the chain corresponds to 965–1001; the sequence is SVMGNVWLKHWSEVNSRYGSNPNAARYLAIYFALGIG. Residues 1002-1023 traverse the membrane as a helical segment; the sequence is SALATLIQTIVLWVFCTIHASK. Residues 1024–1066 are Cytoplasmic-facing; the sequence is YLHNLMTNSVLRAPMTFFETTPIGRILNRFSNDIYKVDALLGR. A helical transmembrane segment spans residues 1067 to 1087; it reads TFSQFFVNAVKVTFTITVICA. A topological domain (vacuolar) is located at residue T1088. The helical transmembrane segment at 1089-1109 threads the bilayer; that stretch reads TWQFIFIIIPLSVFYIYYQQY. The Cytoplasmic portion of the chain corresponds to 1110–1180; it reads YLRTSRELRR…NANRWLAYRL (71 aa). Residues 1181–1201 form a helical membrane-spanning segment; that stretch reads ELIGSIIILGAATLSVFRLKQ. Residues 1202–1205 are Vacuolar-facing; it reads GTLT. A helical transmembrane segment spans residues 1206 to 1226; that stretch reads AGMVGLSLSYALQITQTLNWI. Topologically, residues 1227-1515 are cytoplasmic; it reads VRMTVEVETN…CMEAGLVNEN (289 aa). The region spanning 1272–1507 is the ABC transporter 2 domain; it reads IKFNNYSTRY…NKSLFYSLCM (236 aa). ATP is bound at residue 1306-1313; that stretch reads GRTGAGKS.

This sequence belongs to the ABC transporter superfamily. ABCC family. Conjugate transporter (TC 3.A.1.208) subfamily.

It localises to the vacuole membrane. It catalyses the reaction Cd(2+)(in) + ATP + H2O = Cd(2+)(out) + ADP + phosphate + H(+). The catalysed reaction is an S-substituted glutathione(in) + ATP + H2O = an S-substituted glutathione(out) + ADP + phosphate + H(+). Its function is as follows. Cooperates for the ATP-dependent vacuolar transport of bilirubin and glutathione conjugates. In Saccharomyces cerevisiae (strain ATCC 204508 / S288c) (Baker's yeast), this protein is Metal resistance protein YCF1 (YCF1).